The chain runs to 436 residues: Enolase (436 aa).

His159 and Glu168 together coordinate substrate. Catalysis depends on Glu211, which acts as the Proton donor. The Mg(2+) site is built by Asp246, Glu295, and Asp322. Glu295 and Asp322 together coordinate substrate. Lys347 serves as the catalytic Proton acceptor. Substrate is bound by residues 374-377 (SHRS) and Lys398.

The protein belongs to the enolase family. As to quaternary structure, homodimer. It depends on Mg(2+) as a cofactor.

The protein localises to the cytoplasm. The catalysed reaction is (2R)-2-phosphoglycerate = phosphoenolpyruvate + H2O. It participates in carbohydrate degradation; glycolysis; pyruvate from D-glyceraldehyde 3-phosphate: step 4/5. This is Enolase from Neocallimastix frontalis (Rumen fungus).